A 238-amino-acid chain; its full sequence is tRNA1(Val) (adenine(37)-N6)-methyltransferase (238 aa).

Belongs to the methyltransferase superfamily. tRNA (adenine-N(6)-)-methyltransferase family.

It is found in the cytoplasm. The enzyme catalyses adenosine(37) in tRNA1(Val) + S-adenosyl-L-methionine = N(6)-methyladenosine(37) in tRNA1(Val) + S-adenosyl-L-homocysteine + H(+). Functionally, specifically methylates the adenine in position 37 of tRNA(1)(Val) (anticodon cmo5UAC). The sequence is that of tRNA1(Val) (adenine(37)-N6)-methyltransferase from Shewanella sp. (strain W3-18-1).